The sequence spans 395 residues: Argininosuccinate synthase (395 aa).

ATP contacts are provided by residues 10 to 18 and Ala-37; that span reads AYSGGLDTS. L-citrulline is bound by residues Tyr-88 and Ser-93. Residue Gly-118 participates in ATP binding. Positions 120, 124, and 125 each coordinate L-aspartate. L-citrulline is bound at residue Asn-124. L-citrulline-binding residues include Arg-128, Ser-179, Ser-188, Glu-264, and Tyr-276.

Belongs to the argininosuccinate synthase family. Type 1 subfamily. Homotetramer.

The protein localises to the cytoplasm. The enzyme catalyses L-citrulline + L-aspartate + ATP = 2-(N(omega)-L-arginino)succinate + AMP + diphosphate + H(+). It participates in amino-acid biosynthesis; L-arginine biosynthesis; L-arginine from L-ornithine and carbamoyl phosphate: step 2/3. The protein is Argininosuccinate synthase of Pelagibacter ubique (strain HTCC1062).